The sequence spans 1175 residues: DNA-directed RNA polymerase subunit beta (1175 aa).

The interval 12 to 33 (QSKTDRPQSSSNGSSSLNGSVP) is disordered. Low complexity predominate over residues 20 to 31 (SSSNGSSSLNGS).

Belongs to the RNA polymerase beta chain family. As to quaternary structure, the RNAP catalytic core consists of 2 alpha, 1 beta, 1 beta' and 1 omega subunit. When a sigma factor is associated with the core the holoenzyme is formed, which can initiate transcription.

It carries out the reaction RNA(n) + a ribonucleoside 5'-triphosphate = RNA(n+1) + diphosphate. DNA-dependent RNA polymerase catalyzes the transcription of DNA into RNA using the four ribonucleoside triphosphates as substrates. The sequence is that of DNA-directed RNA polymerase subunit beta from Mycobacterium avium (strain 104).